The sequence spans 617 residues: Chitin elicitor receptor kinase 1 (617 aa).

The N-terminal stretch at 1–23 is a signal peptide; it reads MKLKISLIAPILLLFSFFFAVES. The Extracellular segment spans residues 24–232; sequence KCRTSCPLAL…KSSKQDGVGA (209 aa). Disulfide bonds link C25/C93, C29/C155, and C91/C153. N-linked (GlcNAc...) asparagine glycans are attached at residues N40, N52, and N102. Positions 46–74 constitute a LysM 1; degenerate domain; it reads VINQNLNSSIAPYDQINFDPILRYNSNIK. One can recognise a LysM 2; degenerate domain in the interval 108-140; the sequence is RQEDTYERVAISNYANLTTMESLQARNPFPATN. Residue 109–115 participates in chitin binding; sequence QEDTYER. Residue N123 is glycosylated (N-linked (GlcNAc...) asparagine). 137-143 lines the chitin pocket; that stretch reads PATNIPL. N152 carries N-linked (GlcNAc...) asparagine glycosylation. Positions 168–211 constitute a LysM 3 domain; it reads VTYPLRPEDSLSSIARSSGVSADILQRYNPGVNFNSGNGIVYVP. The chain crosses the membrane as a helical span at residues 233–253; the sequence is GVIAGIVIGVIVALLLILFIV. Over 254-617 the chain is Cytoplasmic; sequence YYAYRKNKSK…EDLVSLMSGR (364 aa). S266, S268, and S274 each carry phosphoserine. A Protein kinase domain is found at 322 to 594; it reads FNLSFKIGQG…YIVVALSTLF (273 aa). Residues 328 to 336 and K349 contribute to the ATP site; that span reads IGQGGFGAV. The residue at position 390 (Y390) is a Phosphotyrosine. D441 functions as the Proton acceptor in the catalytic mechanism. 2 positions are modified to phosphothreonine: T479 and T519.

The protein belongs to the protein kinase superfamily. Ser/Thr protein kinase family. Forms homodimers and homooligomers. Homodimerization is required to trigger plant defenses. Binds to chitin, chitosan and chito-oligomer oligosaccharide elicitors. Interaction with chitin octamer (NAG(8)) promotes homodimerization while shorter chitin oligomers inhibit homodimerization. Interacts with Pseudomonas syringae hopAB2/avrPtoB. Interacts (preferentially when unphosphorylated) with PBL27 at the plasma membrane. Binds to IOS1. Autophosphorylated. Autophosphorylation is induced by chitin and derivatives. In terms of processing, ubiquitinated and targeted to the proteasome by hopAB2/avrPtoB of Pseudomonas syringae pv. tomato DC3000. In terms of tissue distribution, expressed ubiquitously, with lowest expression in pollen.

The protein localises to the cell membrane. The catalysed reaction is L-seryl-[protein] + ATP = O-phospho-L-seryl-[protein] + ADP + H(+). It carries out the reaction L-threonyl-[protein] + ATP = O-phospho-L-threonyl-[protein] + ADP + H(+). With respect to regulation, activated by chitin-mediated homodimerization. Its function is as follows. Lysin motif (LysM) receptor kinase that functions as a cell surface receptor in chitin elicitor (chitooligosaccharides) signaling leading to innate immunity toward both biotic and abiotic stresses (e.g. tolerance to salinity, heavy-metal stresses, and Botrytis cinerea infection). Recognizes microbe-derived N-acetylglucosamine (NAG)-containing ligands. Involved in the resistance to pathogenic fungi Alternaria brassicicola and Erysiphe cichoracearum, probably by sensing microbe-associated molecular patterns (MAMP) and pathogen-associated molecular patterns (PAMP). Plays an essential role in detecting peptidoglycans (e.g. PGNs) and restricting bacterial growth. Target of the bacterial type III effector E3-ligase protein hopAB2/avrPtoB of Pseudomonas syringae pv. tomato DC3000 that mediates ubiquitination and subsequent proteolysis, thus blocking all defense responses by suppressing PAMP-triggered immunity (PTI). Mediates chitin-induced phosphorylation of PBL27. The protein is Chitin elicitor receptor kinase 1 (CERK1) of Arabidopsis thaliana (Mouse-ear cress).